Reading from the N-terminus, the 261-residue chain is Kallikrein 1-related peptidase b21 (261 aa).

A signal peptide spans 1-17 (MRFLILFLALSLGEIDA). Positions 18–24 (APPVQSR) are cleaved as a propeptide — activation peptide. Residues 25–258 (IVGGFNCEKN…FTSWIKDTMA (234 aa)) form the Peptidase S1 domain. 5 cysteine pairs are disulfide-bonded: Cys-31-Cys-173, Cys-50-Cys-66, Cys-152-Cys-219, Cys-184-Cys-198, and Cys-209-Cys-234. Catalysis depends on His-65, which acts as the Charge relay system. An N-linked (GlcNAc...) asparagine glycan is attached at Asn-102. Catalysis depends on Asp-120, which acts as the Charge relay system. Catalysis depends on Ser-213, which acts as the Charge relay system.

It belongs to the peptidase S1 family. Kallikrein subfamily. As to expression, expressed in testis and submaxillary gland. In the testis, expression localized specifically to Leydig cells in the interstitial tissues.

It carries out the reaction Preferential cleavage of Arg-|-Xaa bonds in small molecule substrates. Highly selective action to release kallidin (lysyl-bradykinin) from kininogen involves hydrolysis of Met-|-Xaa or Leu-|-Xaa.. With respect to regulation, inhibited by protease inhibitors diisopropylfluorophosphate, leupeptin, antipain, benzamidine, phenylmethylsulfonyl fluoride and soybean trypsin inhibitor. In terms of biological role, glandular kallikreins cleave Met-Lys and Arg-Ser bonds in kininogen to release Lys-bradykinin. Displays trypsin-like substrate specificity and shows activity towards casein, gelatin, fibronectin and IGFBP3. The chain is Kallikrein 1-related peptidase b21 (Klk1b21) from Mus musculus (Mouse).